The following is a 427-amino-acid chain: Enolase 2 (427 aa).

Gln-163 is a (2R)-2-phosphoglycerate binding site. Glu-205 serves as the catalytic Proton donor. Asp-242, Glu-285, and Asp-312 together coordinate Mg(2+). (2R)-2-phosphoglycerate-binding residues include Lys-337, Arg-366, Ser-367, and Lys-388. Lys-337 acts as the Proton acceptor in catalysis.

The protein belongs to the enolase family. Component of the RNA degradosome, a multiprotein complex involved in RNA processing and mRNA degradation. Mg(2+) is required as a cofactor.

Its subcellular location is the cytoplasm. It is found in the secreted. The protein resides in the cell surface. The catalysed reaction is (2R)-2-phosphoglycerate = phosphoenolpyruvate + H2O. It participates in carbohydrate degradation; glycolysis; pyruvate from D-glyceraldehyde 3-phosphate: step 4/5. Catalyzes the reversible conversion of 2-phosphoglycerate (2-PG) into phosphoenolpyruvate (PEP). It is essential for the degradation of carbohydrates via glycolysis. The chain is Enolase 2 from Methylococcus capsulatus (strain ATCC 33009 / NCIMB 11132 / Bath).